The chain runs to 593 residues: NADH-quinone oxidoreductase subunit C/D (593 aa).

The NADH dehydrogenase I subunit C stretch occupies residues 1-184 (MTADNALYIP…DPYSLTLAKQ (184 aa)). The NADH dehydrogenase I subunit D stretch occupies residues 208-593 (DYMFLNLGPN…IDFVMADVDR (386 aa)).

This sequence in the N-terminal section; belongs to the complex I 30 kDa subunit family. In the C-terminal section; belongs to the complex I 49 kDa subunit family. As to quaternary structure, NDH-1 is composed of 13 different subunits. Subunits NuoB, CD, E, F, and G constitute the peripheral sector of the complex.

It localises to the cell inner membrane. It carries out the reaction a quinone + NADH + 5 H(+)(in) = a quinol + NAD(+) + 4 H(+)(out). NDH-1 shuttles electrons from NADH, via FMN and iron-sulfur (Fe-S) centers, to quinones in the respiratory chain. The immediate electron acceptor for the enzyme in this species is believed to be ubiquinone. Couples the redox reaction to proton translocation (for every two electrons transferred, four hydrogen ions are translocated across the cytoplasmic membrane), and thus conserves the redox energy in a proton gradient. The chain is NADH-quinone oxidoreductase subunit C/D from Pseudomonas syringae pv. tomato (strain ATCC BAA-871 / DC3000).